A 93-amino-acid chain; its full sequence is Sec-independent protein translocase protein TatA (93 aa).

A helical membrane pass occupies residues 1 to 21 (MGNVFSGWHLLVILLVIVLLF). A disordered region spans residues 49 to 93 (DITRSQDGHPDSQGNFAESASSVPFVKSEKQSEKRASVTEAKKSK). Over residues 60 to 70 (SQGNFAESASS) the composition is skewed to polar residues. Residues 75–93 (KSEKQSEKRASVTEAKKSK) show a composition bias toward basic and acidic residues.

Belongs to the TatA/E family. As to quaternary structure, the Tat system comprises two distinct complexes: a TatABC complex, containing multiple copies of TatA, TatB and TatC subunits, and a separate TatA complex, containing only TatA subunits. Substrates initially bind to the TatABC complex, which probably triggers association of the separate TatA complex to form the active translocon.

The protein resides in the cell membrane. Its function is as follows. Part of the twin-arginine translocation (Tat) system that transports large folded proteins containing a characteristic twin-arginine motif in their signal peptide across membranes. TatA could form the protein-conducting channel of the Tat system. This chain is Sec-independent protein translocase protein TatA, found in Tropheryma whipplei (strain TW08/27) (Whipple's bacillus).